We begin with the raw amino-acid sequence, 498 residues long: Zinc finger protein 395 (498 aa).

A disordered region spans residues Gln-129 to Arg-165. Positions Lys-130–Arg-157 are enriched in polar residues. The Nuclear export signal signature appears at Met-171–Leu-180. Positions Lys-209–Lys-245 are disordered. Residues Val-214–Gly-231 show a composition bias toward low complexity. The C2H2-type zinc-finger motif lies at Tyr-285–His-310.

The protein localises to the cytoplasm. It localises to the nucleus. This chain is Zinc finger protein 395 (znf395), found in Xenopus laevis (African clawed frog).